Here is a 285-residue protein sequence, read N- to C-terminus: 2,3,4,5-tetrahydropyridine-2,6-dicarboxylate N-succinyltransferase (285 aa).

The substrate site is built by R111 and D148.

It belongs to the transferase hexapeptide repeat family. Homotrimer.

It localises to the cytoplasm. It catalyses the reaction (S)-2,3,4,5-tetrahydrodipicolinate + succinyl-CoA + H2O = (S)-2-succinylamino-6-oxoheptanedioate + CoA. Its pathway is amino-acid biosynthesis; L-lysine biosynthesis via DAP pathway; LL-2,6-diaminopimelate from (S)-tetrahydrodipicolinate (succinylase route): step 1/3. The protein is 2,3,4,5-tetrahydropyridine-2,6-dicarboxylate N-succinyltransferase of Rhizobium meliloti (strain 1021) (Ensifer meliloti).